Reading from the N-terminus, the 318-residue chain is MVGYDPKADDRDISNVEVAVAGSVSGLVTRVLISPLDVIKIRFQLQIERLSRSDPNAKYHGILQAGRQILQEEGPTAFWKGHIPAQLLSIGYGAVQFLSFEALTELVHRASVRDARDFSVHFLCGGLSACVATLAVHPVDVLRTRFAAQGEPRVYKTLRDAVVTMYRTEGPLVFYKGLNPTLIAIFPYAGFQFSIYSSLKRAYEWALPAEGKKNGNFKNLLCGSGAGVISKTLTYPLDLFKKRLQVGGFEQARASFGQVRSYKGLLDCAGQVLREEGAQGCFKGLSPSLLKAALSTGLVFFWYELFCNFFHHMRKADS.

Solcar repeat units lie at residues 13 to 106 (ISNV…LTEL), 116 to 202 (RDFS…LKRA), and 214 to 309 (NGNF…FCNF). The helical transmembrane segment at 19–39 (AVAGSVSGLVTRVLISPLDVI) threads the bilayer. The residue at position 51 (serine 51) is a Phosphoserine. The next 4 helical transmembrane spans lie at 87-107 (LLSI…TELV), 122-142 (FLCG…VDVL), 173-193 (VFYK…GFQF), and 220-240 (LLCG…LDLF). The Substrate recognition motif lies at 241 to 246 (KKRLQV). A helical membrane pass occupies residues 293 to 313 (ALSTGLVFFWYELFCNFFHHM).

This sequence belongs to the mitochondrial carrier (TC 2.A.29) family.

Its subcellular location is the mitochondrion membrane. The enzyme catalyses thiamine phosphate(out) + thiamine diphosphate(in) = thiamine phosphate(in) + thiamine diphosphate(out). Functionally, mitochondrial transporter mediating uptake of thiamine diphosphate into mitochondria. It is not clear if the antiporter activity is affected by the membrane potential or by the proton electrochemical gradient. This chain is Mitochondrial thiamine pyrophosphate carrier (SLC25A19), found in Bos taurus (Bovine).